The chain runs to 454 residues: UDP-N-acetylmuramoylalanine--D-glutamate ligase (454 aa).

117-123 is an ATP binding site; the sequence is GTNGKTT.

This sequence belongs to the MurCDEF family.

Its subcellular location is the cytoplasm. The enzyme catalyses UDP-N-acetyl-alpha-D-muramoyl-L-alanine + D-glutamate + ATP = UDP-N-acetyl-alpha-D-muramoyl-L-alanyl-D-glutamate + ADP + phosphate + H(+). It functions in the pathway cell wall biogenesis; peptidoglycan biosynthesis. Cell wall formation. Catalyzes the addition of glutamate to the nucleotide precursor UDP-N-acetylmuramoyl-L-alanine (UMA). This Alkaliphilus oremlandii (strain OhILAs) (Clostridium oremlandii (strain OhILAs)) protein is UDP-N-acetylmuramoylalanine--D-glutamate ligase.